A 97-amino-acid chain; its full sequence is Ferredoxin-like protein (97 aa).

The region spanning 56-86 (GQVEVIADGCMECGTCRVLCEESGDIDWSYP) is the 4Fe-4S ferredoxin-type domain.

It to ferredoxins from P.putida and C.tartarivorum, ferredoxin I from A.vinelandii, ferredoxin II from D.desulfuricans.

In terms of biological role, could be a 3Fe-4S cluster-containing protein. In Sinorhizobium fredii (strain NBRC 101917 / NGR234), this protein is Ferredoxin-like protein (fixX).